The following is a 173-amino-acid chain: Crossover junction endodeoxyribonuclease RuvC (173 aa).

Catalysis depends on residues Asp-8, Glu-69, and Asp-141. Positions 8, 69, and 141 each coordinate Mg(2+).

The protein belongs to the RuvC family. In terms of assembly, homodimer which binds Holliday junction (HJ) DNA. The HJ becomes 2-fold symmetrical on binding to RuvC with unstacked arms; it has a different conformation from HJ DNA in complex with RuvA. In the full resolvosome a probable DNA-RuvA(4)-RuvB(12)-RuvC(2) complex forms which resolves the HJ. Mg(2+) is required as a cofactor.

The protein resides in the cytoplasm. The catalysed reaction is Endonucleolytic cleavage at a junction such as a reciprocal single-stranded crossover between two homologous DNA duplexes (Holliday junction).. In terms of biological role, the RuvA-RuvB-RuvC complex processes Holliday junction (HJ) DNA during genetic recombination and DNA repair. Endonuclease that resolves HJ intermediates. Cleaves cruciform DNA by making single-stranded nicks across the HJ at symmetrical positions within the homologous arms, yielding a 5'-phosphate and a 3'-hydroxyl group; requires a central core of homology in the junction. The consensus cleavage sequence is 5'-(A/T)TT(C/G)-3'. Cleavage occurs on the 3'-side of the TT dinucleotide at the point of strand exchange. HJ branch migration catalyzed by RuvA-RuvB allows RuvC to scan DNA until it finds its consensus sequence, where it cleaves and resolves the cruciform DNA. This chain is Crossover junction endodeoxyribonuclease RuvC, found in Xylella fastidiosa (strain Temecula1 / ATCC 700964).